A 315-amino-acid chain; its full sequence is Aspartate carbamoyltransferase catalytic subunit (315 aa).

Residues Arg-64 and Thr-65 each coordinate carbamoyl phosphate. L-aspartate is bound at residue Lys-92. Carbamoyl phosphate is bound by residues Arg-114, His-142, and Gln-145. L-aspartate contacts are provided by Arg-175 and Arg-229. The carbamoyl phosphate site is built by Gly-270 and Pro-271.

Belongs to the aspartate/ornithine carbamoyltransferase superfamily. ATCase family. As to quaternary structure, heterododecamer (2C3:3R2) of six catalytic PyrB chains organized as two trimers (C3), and six regulatory PyrI chains organized as three dimers (R2).

The catalysed reaction is carbamoyl phosphate + L-aspartate = N-carbamoyl-L-aspartate + phosphate + H(+). It functions in the pathway pyrimidine metabolism; UMP biosynthesis via de novo pathway; (S)-dihydroorotate from bicarbonate: step 2/3. Its function is as follows. Catalyzes the condensation of carbamoyl phosphate and aspartate to form carbamoyl aspartate and inorganic phosphate, the committed step in the de novo pyrimidine nucleotide biosynthesis pathway. The chain is Aspartate carbamoyltransferase catalytic subunit from Bradyrhizobium diazoefficiens (strain JCM 10833 / BCRC 13528 / IAM 13628 / NBRC 14792 / USDA 110).